A 157-amino-acid polypeptide reads, in one-letter code: Ribosomal RNA large subunit methyltransferase H (157 aa).

S-adenosyl-L-methionine-binding positions include Leu-73, Gly-105, and 124-129; that span reads LSLMTF.

The protein belongs to the RNA methyltransferase RlmH family. As to quaternary structure, homodimer.

It is found in the cytoplasm. The catalysed reaction is pseudouridine(1915) in 23S rRNA + S-adenosyl-L-methionine = N(3)-methylpseudouridine(1915) in 23S rRNA + S-adenosyl-L-homocysteine + H(+). Its function is as follows. Specifically methylates the pseudouridine at position 1915 (m3Psi1915) in 23S rRNA. This chain is Ribosomal RNA large subunit methyltransferase H, found in Flavobacterium johnsoniae (strain ATCC 17061 / DSM 2064 / JCM 8514 / BCRC 14874 / CCUG 350202 / NBRC 14942 / NCIMB 11054 / UW101) (Cytophaga johnsonae).